A 54-amino-acid polypeptide reads, in one-letter code: uncharacterized protein (54 aa).

This is an uncharacterized protein from Escherichia coli (strain K12).